We begin with the raw amino-acid sequence, 292 residues long: Tetratricopeptide repeat protein 1 (292 aa).

The disordered stretch occupies residues 20–125 (TDPQEAECLH…SSRLKEEGNE (106 aa)). 2 stretches are compositionally biased toward basic and acidic residues: residues 36–49 (KEQH…KDVD) and 75–85 (GADKLENKPED). Over residues 86 to 98 (DMNPSELDEEYLM) the composition is skewed to acidic residues. The residue at position 90 (serine 90) is a Phosphoserine. Residues 99–125 (ELEKNMPDEEKKRRREESSRLKEEGNE) are compositionally biased toward basic and acidic residues. 3 TPR repeats span residues 116 to 149 (SSRL…CPSC), 155 to 188 (SVLF…NPSY), and 189 to 222 (IRAI…DPSV).

Interacts with the GAP domain of NF1. Interacts (via TPR repeats) with HSP90AA1 and HSPA8.

This is Tetratricopeptide repeat protein 1 (TTC1) from Bos taurus (Bovine).